Consider the following 315-residue polypeptide: Ribosomal RNA small subunit methyltransferase H (315 aa).

S-adenosyl-L-methionine is bound by residues 32 to 34 (GGH), Asp-52, Phe-78, Asp-100, and Gln-107.

The protein belongs to the methyltransferase superfamily. RsmH family.

Its subcellular location is the cytoplasm. It carries out the reaction cytidine(1402) in 16S rRNA + S-adenosyl-L-methionine = N(4)-methylcytidine(1402) in 16S rRNA + S-adenosyl-L-homocysteine + H(+). In terms of biological role, specifically methylates the N4 position of cytidine in position 1402 (C1402) of 16S rRNA. This Psychromonas ingrahamii (strain DSM 17664 / CCUG 51855 / 37) protein is Ribosomal RNA small subunit methyltransferase H.